We begin with the raw amino-acid sequence, 86 residues long: Thioredoxin (86 aa).

Residues cysteine 15 and cysteine 18 each act as nucleophile in the active site. Cysteine 15 and cysteine 18 form a disulfide bridge.

Belongs to the glutaredoxin family.

Its function is as follows. Does not function as a glutathione-disulfide oxidoreductase in the presence of glutathione and glutathione reductase. Has low thioredoxin activity in vitro. This chain is Thioredoxin, found in Methanocaldococcus jannaschii (strain ATCC 43067 / DSM 2661 / JAL-1 / JCM 10045 / NBRC 100440) (Methanococcus jannaschii).